The chain runs to 399 residues: Sister chromatid cohesion protein DCC1 (399 aa).

This sequence belongs to the DCC1 family. In terms of assembly, component of the CTF18-RFC complex which consists of CTF8, CTF18, DSCC1 and the RFC complex. Interacts with CTF8 and CTF18. Interacts with DDX11.

It localises to the nucleus. Its function is as follows. Loads PCNA onto primed templates regulating velocity, spacing and restart activity of replication forks. May couple DNA replication to sister chromatid cohesion through regulation of the acetylation of the cohesin subunit SMC3. The protein is Sister chromatid cohesion protein DCC1 (DSCC1) of Mus musculus (Mouse).